We begin with the raw amino-acid sequence, 265 residues long: WUSCHEL-related homeobox 3B (265 aa).

The homeobox; WUS-type DNA-binding region spans 4-68; that stretch reads TPSTRWCPTP…NHKARERQRL (65 aa). Disordered stretches follow at residues 77-107 and 242-265; these read QQQY…APPA and PTKS…TSTN. Over residues 254-265 the composition is skewed to low complexity; sequence SSKSSSCSTSTN.

It belongs to the WUS homeobox family. In terms of tissue distribution, predominantly expressed in tissues enriched for shoot meristems and young lateral organ primordia. First expressed in lateral domains of shoot meristems. It is then expressed in the margins of young lateral organ primordia. Not expressed in roots, seedling leaves or fully expanded coleoptiles. Also expressed in vegetative shoot apices (five leaf primordia and the SAM) and in the male inflorescence. Expressed at high level in the female inflorescence.

Its subcellular location is the nucleus. Functionally, probable transcription factor required to initiate organ founder cells in a lateral domain of shoot meristems. Involved in leaf formation. This is WUSCHEL-related homeobox 3B (WOX3B) from Zea mays (Maize).